Reading from the N-terminus, the 136-residue chain is Large ribosomal subunit protein uL16 (136 aa).

Belongs to the universal ribosomal protein uL16 family. Part of the 50S ribosomal subunit.

In terms of biological role, binds 23S rRNA and is also seen to make contacts with the A and possibly P site tRNAs. The protein is Large ribosomal subunit protein uL16 of Rickettsia akari (strain Hartford).